The following is a 152-amino-acid chain: Mitochondrial fission 1 protein (152 aa).

The residue at position 1 (methionine 1) is an N-acetylmethionine. Residues 1-122 (MEAVLNELVS…LIDKAMKKDG (122 aa)) are Cytoplasmic-facing. At serine 10 the chain carries Phosphoserine. The stretch at 71–104 (RDYVFYLAVGNYRLKEYEKALKYVRGLLQTEPQN) is one TPR repeat. The helical transmembrane segment at 123–143 (LVGMAIVGGMALGVAGLAGLI) threads the bilayer. Topologically, residues 144–152 (GLAVSKSKS) are mitochondrial intermembrane.

Belongs to the FIS1 family. Interacts with DNM1L/DLP1 through the TPR region; may form part of a larger protein complex at the endoplasmic reticulum-mitochondrial interface during mitochondrial fission. Interacts with MARCHF5. Interacts with MIEF1. Interacts with PEX11A, PEX11B and PEX11G. Post-translationally, ubiquitinated by MARCHF5.

It localises to the mitochondrion outer membrane. The protein localises to the peroxisome membrane. Involved in the fragmentation of the mitochondrial network and its perinuclear clustering. Plays a minor role in the recruitment and association of the fission mediator dynamin-related protein 1 (DNM1L) to the mitochondrial surface and mitochondrial fission. May not be essential for the assembly of functional fission complexes and the subsequent membrane scission event. Also mediates peroxisomal fission. May act when the products of fission are directed toward mitochondrial homeostasis, mitophagy, or apoptosis. Can induce cytochrome c release from the mitochondrion to the cytosol, ultimately leading to apoptosis. In Rattus norvegicus (Rat), this protein is Mitochondrial fission 1 protein.